The sequence spans 150 residues: MKCPFCNASDTKVVDTRASEDDKIVRRRRECISCHKRFTTYERYDFNNLTVVKKDKNREAFDRDKVYRGMKKSCEKRPVPDSVLLEATKEIEVELTHSNKREVDSSEIGELIMKKLKKIDKVAYIRFASVYREFTDVKSFNEEISKLDNE.

The segment at 3 to 34 is a zinc-finger region; it reads CPFCNASDTKVVDTRASEDDKIVRRRRECISC. Residues 49–139 enclose the ATP-cone domain; that stretch reads LTVVKKDKNR…VYREFTDVKS (91 aa).

It belongs to the NrdR family. The cofactor is Zn(2+).

In terms of biological role, negatively regulates transcription of bacterial ribonucleotide reductase nrd genes and operons by binding to NrdR-boxes. This chain is Transcriptional repressor NrdR, found in Finegoldia magna (strain ATCC 29328 / DSM 20472 / WAL 2508) (Peptostreptococcus magnus).